The sequence spans 249 residues: Aquaporin TIP2-1 (249 aa).

2 helical membrane passes run 20-40 (AYVA…GSAI) and 54-74 (AGLV…VSVA). The NPA 1 signature appears at 83–85 (NPA). A run of 3 helical transmembrane segments spans residues 102 to 122 (VFYW…LGFV), 141 to 161 (GVVF…ATAA), and 168 to 188 (LGTI…LAAG). The short motif at 196-198 (NPA) is the NPA 2 element. Residues 217–237 (WVGPLVGGGLAGLVYGDVFIG) form a helical membrane-spanning segment.

This sequence belongs to the MIP/aquaporin (TC 1.A.8) family. TIP (TC 1.A.8.10) subfamily.

The protein localises to the vacuole membrane. Aquaporins facilitate the transport of water and small neutral solutes across cell membranes. The chain is Aquaporin TIP2-1 (TIP2-1) from Zea mays (Maize).